We begin with the raw amino-acid sequence, 316 residues long: MTGTTTARSDDDSWDIASSVGATAVMVAAARAAETRSASPLIQDPFAQLLVERAGSGAWSVLASDGLRQQLAELDPDADRVMQYAVDYQAVRTRFFDGFFERAAHAGITQVVILAAGLDSRAYRLDWPAGTTVYEIDQPLVLQYKRHTLDAHDVRSACLRREVPVDLRQDWPAALQREGFDVAEPTAWLAEGLLMYLPTEAQDRLFELIVDQSAPGSRIAVEAVGPDNDKRQEFRSKMRAHFDRARKLAGMDGESLDVGSLMYHDENRTDVPQWLAGRGWTVRAIPAEVEMAEAGRPGYIEEDLRGNTLIEAELKG.

Residues Asp-137 and 166-167 contribute to the S-adenosyl-L-methionine site; that span reads DL.

This sequence belongs to the UPF0677 family.

In terms of biological role, exhibits S-adenosyl-L-methionine-dependent methyltransferase activity. The sequence is that of Putative S-adenosyl-L-methionine-dependent methyltransferase MAB_4606c from Mycobacteroides abscessus (strain ATCC 19977 / DSM 44196 / CCUG 20993 / CIP 104536 / JCM 13569 / NCTC 13031 / TMC 1543 / L948) (Mycobacterium abscessus).